The following is a 228-amino-acid chain: Mediator of RNA polymerase II transcription subunit 7-B (228 aa).

The protein belongs to the Mediator complex subunit 7 family. As to quaternary structure, component of the Mediator complex.

It localises to the nucleus. Component of the Mediator complex, a coactivator involved in the regulated transcription of nearly all RNA polymerase II-dependent genes. Mediator functions as a bridge to convey information from gene-specific regulatory proteins to the basal RNA polymerase II transcription machinery. Mediator is recruited to promoters by direct interactions with regulatory proteins and serves as a scaffold for the assembly of a functional preinitiation complex with RNA polymerase II and the general transcription factors. The protein is Mediator of RNA polymerase II transcription subunit 7-B (med7-b) of Xenopus laevis (African clawed frog).